The primary structure comprises 293 residues: UDP-3-O-acyl-N-acetylglucosamine deacetylase (293 aa).

Residues His79, His236, and Asp240 each contribute to the Zn(2+) site. The active-site Proton donor is His263.

Belongs to the LpxC family. The cofactor is Zn(2+).

It carries out the reaction a UDP-3-O-[(3R)-3-hydroxyacyl]-N-acetyl-alpha-D-glucosamine + H2O = a UDP-3-O-[(3R)-3-hydroxyacyl]-alpha-D-glucosamine + acetate. It participates in glycolipid biosynthesis; lipid IV(A) biosynthesis; lipid IV(A) from (3R)-3-hydroxytetradecanoyl-[acyl-carrier-protein] and UDP-N-acetyl-alpha-D-glucosamine: step 2/6. Its function is as follows. Catalyzes the hydrolysis of UDP-3-O-myristoyl-N-acetylglucosamine to form UDP-3-O-myristoylglucosamine and acetate, the committed step in lipid A biosynthesis. This is UDP-3-O-acyl-N-acetylglucosamine deacetylase from Phenylobacterium zucineum (strain HLK1).